A 218-amino-acid chain; its full sequence is Sodium channel regulatory subunit beta-1 (218 aa).

An N-terminal signal peptide occupies residues 1-18; the sequence is MGRLLALVVGAALVSSAC. Over 19 to 157 the chain is Extracellular; sequence GGCVEVDSET…DKANRDMASI (139 aa). 2 cysteine pairs are disulfide-bonded: cysteine 21-cysteine 43 and cysteine 40-cysteine 121. Residues 22–150 enclose the Ig-like C2-type domain; sequence VEVDSETEAV…KIHIEVVDKA (129 aa). N-linked (GlcNAc...) asparagine glycans are attached at residues asparagine 93, asparagine 110, asparagine 114, and asparagine 135. Residues 158-179 form a helical membrane-spanning segment; the sequence is VSEIMMYVLIVVLTIWLVAEMI. At 180 to 218 the chain is on the cytoplasmic side; that stretch reads YCYKKIAAATETAAQENASEYLAITSESKENCTGVQVAE.

This sequence belongs to the sodium channel auxiliary subunit SCN1B (TC 8.A.17) family. As to quaternary structure, voltage-gated sodium (Nav) channel consists of an ion-conducting pore-forming alpha subunit functional on its own that is regulated by one or more beta subunits. Interacts with SCN1A; regulatory subunit of SCN1A/Nav1.1. Interacts with SCN3A; regulatory subunit of SCN3A/Nav1.3. Interacts with SCN4A; regulatory subunit of SCN4A/Nav1.4. Interacts with SCN5A; regulatory subunit of SCN5A/Nav1.5. Interacts with SCN8A; regulatory subunit of SCN8A/Nav1.6. Interacts with SCN9A; regulatory subunit of SCN9A/Nav1.7. Interacts with SCN10A; regulatory subunit of SCN10A/Nav1.8. Interacts with NFASC. Interacts with TMEM65. The overall expression of isoform 1 and isoform 2 is very similar. Isoform 1 is abundantly expressed in skeletal muscle, heart and brain. Isoform 2 is highly expressed in brain and skeletal muscle and present at a very low level in heart, placenta, lung, liver, kidney and pancreas. In brain, isoform 2 is most abundant in the cerebellum, followed by the cerebral cortex and occipital lobe, while isoform 1 levels are higher in the cortex compared to the cerebellum. Isoform 2 is expressed in many regions of the brain, including cerebellar Purkinje cells, cortex pyramidal neurons and many of the neuronal fibers throughout the brain (at protein level). Also detected in dorsal root ganglion, in fibers of the spinal nerve and in cortical neurons and their processes (at protein level).

It is found in the cell membrane. It localises to the perikaryon. Its subcellular location is the cell projection. The protein resides in the axon. The protein localises to the secreted. Functionally, regulatory subunit of multiple voltage-gated sodium (Nav) channels directly mediating the depolarization of excitable membranes. Navs, also called VGSCs (voltage-gated sodium channels) or VDSCs (voltage-dependent sodium channels), operate by switching between closed and open conformations depending on the voltage difference across the membrane. In the open conformation they allow Na(+) ions to selectively pass through the pore, along their electrochemical gradient. The influx of Na+ ions provokes membrane depolarization, initiating the propagation of electrical signals throughout cells and tissues. The accessory beta subunits participate in localization and functional modulation of the Nav channels. Modulates the activity of SCN1A/Nav1.1, SCN2A/Nav1.2, SCN3A/Nav1.3, SCN4A/Nav1.4, SCN5A/Nav1.5, SCN8A/Nav1.6, SCN9A/Nav1.7 and SCN10A/Nav1.8. In terms of biological role, cell adhesion molecule that plays a critical role in neuronal migration and pathfinding during brain development. Stimulates neurite outgrowth. Has no regulatory function on the SCN2A sodium channel complex. In Homo sapiens (Human), this protein is Sodium channel regulatory subunit beta-1.